Consider the following 205-residue polypeptide: Protein phosphatase inhibitor 2 family member B (205 aa).

The segment at methionine 1–serine 44 is disordered. An N-acetylalanine modification is found at alanine 2. Required for binding PPP1CC stretches follow at residues lysine 12–asparagine 17 and lysine 43–threonine 55. Positions asparagine 17–valine 26 are enriched in polar residues. The segment covering glutamine 31–serine 44 has biased composition (basic and acidic residues). Serine 44 is subject to Phosphoserine. 2 positions are modified to phosphothreonine: threonine 89 and threonine 92. The disordered stretch occupies residues glutamate 111–methionine 142. Residues serine 121, serine 122, serine 127, and serine 130 each carry the phosphoserine modification. Acidic residues predominate over residues serine 121 to serine 130. The span at proline 131–methionine 142 shows a compositional bias: basic and acidic residues. The interval histidine 147 to glutamate 150 is required for binding PPP1CC catalytic center, displacing metal ions and inhibition of PPP1CC catalytic activity. Positions lysine 163–serine 205 are disordered. A compositionally biased stretch (acidic residues) spans aspartate 167–aspartate 179. The span at serine 182 to serine 205 shows a compositional bias: polar residues.

Belongs to the protein phosphatase inhibitor 2 family. As to quaternary structure, interacts with PPP1CC. Only detected in spermatozoa, both heads and tails.

In terms of biological role, inhibitor of protein-phosphatase 1. This chain is Protein phosphatase inhibitor 2 family member B, found in Homo sapiens (Human).